The following is a 21-amino-acid chain: 5-methyltetrahydropteroyltriglutamate--homocysteine methyltransferase (21 aa).

This sequence belongs to the vitamin-B12 independent methionine synthase family. Requires Zn(2+) as cofactor.

It localises to the cytoplasm. The catalysed reaction is 5-methyltetrahydropteroyltri-L-glutamate + L-homocysteine = tetrahydropteroyltri-L-glutamate + L-methionine. It functions in the pathway amino-acid biosynthesis; L-methionine biosynthesis via de novo pathway; L-methionine from L-homocysteine (MetE route): step 1/1. Its function is as follows. Catalyzes the transfer of a methyl group from 5-methyltetrahydrofolate to homocysteine resulting in methionine formation. The polypeptide is 5-methyltetrahydropteroyltriglutamate--homocysteine methyltransferase (Populus euphratica (Euphrates poplar)).